The primary structure comprises 424 residues: MTQTALLQDLEARGLIAQTTDMAALQELLNKESVTLYCGFDPTADSLHIGSLVPILMLKRFQQAGHRPVALVGGATGMIGDPSFKAAERKLNTPDVIEGWVEKIRKQVEPFLSFEGENAAVMANNYDWFGKMNALEFLRDIGKHFSVNAMIKKESVQQRINRDDQGISYTEFSYSLLQGYDFAELNQRLGCKLQIGGSDQWGNITAGTDLTRRLNQTQVYGLTMPLVTKADGTKFGKTESGTIWLDAKKTSPYAFYQFWLGTADADVYKFLRYFSFLSVDEIASIEEADKSREGKPEGQRILAEQVTELVHGKAALEAAQRITHSLFSNDLTNLTADDFAQLAQDGLPTIKLDKSASGLIDALAAGGLAKSKSEARTFIQSGAVSVNGIKVDSLEHAIGDGERLFGQYSLLKRGKKLYALVDWQ.

L-tyrosine is bound at residue Tyr-37. Residues 42 to 51 carry the 'HIGH' region motif; that stretch reads PTADSLHIGS. Residues Tyr-174 and Gln-178 each contribute to the L-tyrosine site. The short motif at 234–238 is the 'KMSKS' region element; it reads KFGKT. Lys-237 is a binding site for ATP. The 66-residue stretch at 357 to 422 folds into the S4 RNA-binding domain; that stretch reads SGLIDALAAG…RGKKLYALVD (66 aa).

The protein belongs to the class-I aminoacyl-tRNA synthetase family. TyrS type 1 subfamily. In terms of assembly, homodimer.

The protein localises to the cytoplasm. It catalyses the reaction tRNA(Tyr) + L-tyrosine + ATP = L-tyrosyl-tRNA(Tyr) + AMP + diphosphate + H(+). Functionally, catalyzes the attachment of tyrosine to tRNA(Tyr) in a two-step reaction: tyrosine is first activated by ATP to form Tyr-AMP and then transferred to the acceptor end of tRNA(Tyr). This is Tyrosine--tRNA ligase from Chromobacterium violaceum (strain ATCC 12472 / DSM 30191 / JCM 1249 / CCUG 213 / NBRC 12614 / NCIMB 9131 / NCTC 9757 / MK).